Here is a 180-residue protein sequence, read N- to C-terminus: Cytidylate kinase (180 aa).

7–15 provides a ligand contact to ATP; that stretch reads GLPGSGTTT.

The protein belongs to the cytidylate kinase family. Type 2 subfamily.

The protein resides in the cytoplasm. The catalysed reaction is CMP + ATP = CDP + ADP. The enzyme catalyses dCMP + ATP = dCDP + ADP. The chain is Cytidylate kinase from Methanosarcina barkeri (strain Fusaro / DSM 804).